We begin with the raw amino-acid sequence, 324 residues long: Elongation factor P--(R)-beta-lysine ligase (324 aa).

75–77 (SPE) is a substrate binding site. ATP is bound by residues 99 to 101 (RNE) and asparagine 108. Tyrosine 117 serves as a coordination point for substrate. 243 to 244 (EL) lines the ATP pocket. Position 250 (glutamate 250) interacts with substrate. ATP is bound at residue glycine 299.

This sequence belongs to the class-II aminoacyl-tRNA synthetase family. EpmA subfamily. Homodimer.

The enzyme catalyses D-beta-lysine + L-lysyl-[protein] + ATP = N(6)-((3R)-3,6-diaminohexanoyl)-L-lysyl-[protein] + AMP + diphosphate + H(+). With EpmB is involved in the beta-lysylation step of the post-translational modification of translation elongation factor P (EF-P). Catalyzes the ATP-dependent activation of (R)-beta-lysine produced by EpmB, forming a lysyl-adenylate, from which the beta-lysyl moiety is then transferred to the epsilon-amino group of a conserved specific lysine residue in EF-P. This is Elongation factor P--(R)-beta-lysine ligase from Vibrio cholerae serotype O1 (strain ATCC 39315 / El Tor Inaba N16961).